A 253-amino-acid chain; its full sequence is 5'-nucleotidase SurE (253 aa).

4 residues coordinate a divalent metal cation: D8, D9, S39, and N92.

It belongs to the SurE nucleotidase family. A divalent metal cation serves as cofactor.

The protein localises to the cytoplasm. The catalysed reaction is a ribonucleoside 5'-phosphate + H2O = a ribonucleoside + phosphate. In terms of biological role, nucleotidase that shows phosphatase activity on nucleoside 5'-monophosphates. The sequence is that of 5'-nucleotidase SurE from Burkholderia pseudomallei (strain 668).